A 213-amino-acid chain; its full sequence is Octanoyltransferase (213 aa).

The 176-residue stretch at 32–207 folds into the BPL/LPL catalytic domain; the sequence is ESTLDEIWLV…NILALLNNPD (176 aa). Substrate contacts are provided by residues 71–78, 138–140, and 151–153; these read RGGQVTYH, SLG, and GLA. Catalysis depends on cysteine 169, which acts as the Acyl-thioester intermediate.

This sequence belongs to the LipB family.

Its subcellular location is the cytoplasm. The enzyme catalyses octanoyl-[ACP] + L-lysyl-[protein] = N(6)-octanoyl-L-lysyl-[protein] + holo-[ACP] + H(+). It participates in protein modification; protein lipoylation via endogenous pathway; protein N(6)-(lipoyl)lysine from octanoyl-[acyl-carrier-protein]: step 1/2. Catalyzes the transfer of endogenously produced octanoic acid from octanoyl-acyl-carrier-protein onto the lipoyl domains of lipoate-dependent enzymes. Lipoyl-ACP can also act as a substrate although octanoyl-ACP is likely to be the physiological substrate. The chain is Octanoyltransferase from Escherichia coli O17:K52:H18 (strain UMN026 / ExPEC).